Reading from the N-terminus, the 145-residue chain is MNASNPCRRFPRSARVRTRAQYTVVFDNARRTSDPLLSLHWRTGDTPPRLGMAVSRKVDTRAVGRNRIKRVLRDAMRHLLPELAGGDYVIVARSAAAKATNPQIRDAFLRLLRRAGALPLPAAPGTMPPARTMHPSSLSPTEPDL.

A compositionally biased stretch (low complexity) spans 120–130 (LPAAPGTMPPA). The segment at 120-145 (LPAAPGTMPPARTMHPSSLSPTEPDL) is disordered. Positions 134–145 (HPSSLSPTEPDL) are enriched in polar residues.

Belongs to the RnpA family. Consists of a catalytic RNA component (M1 or rnpB) and a protein subunit.

The enzyme catalyses Endonucleolytic cleavage of RNA, removing 5'-extranucleotides from tRNA precursor.. Its function is as follows. RNaseP catalyzes the removal of the 5'-leader sequence from pre-tRNA to produce the mature 5'-terminus. It can also cleave other RNA substrates such as 4.5S RNA. The protein component plays an auxiliary but essential role in vivo by binding to the 5'-leader sequence and broadening the substrate specificity of the ribozyme. In Xanthomonas oryzae pv. oryzae (strain MAFF 311018), this protein is Ribonuclease P protein component.